The following is a 400-amino-acid chain: Serine/threonine transporter SstT (400 aa).

Transmembrane regions (helical) follow at residues 14–34 (IIIAIILGIGVALLFPTVTPY), 48–68 (SVAPILVFVLVLSSIANFQVG), 76–96 (VLLLYVVGMLLAAFSAVIASL), 136–156 (AISEANFIGILAWAIGLGLAM), 177–197 (IIHKVIAFAPVGIFGLVAVTF), 211–231 (LLAVLLGTMLFVALVINPILV), 285–305 (IPLGATVNMAGAAVTITVLTL), 311–331 (LGIHVDLATMIILSVVATISA), and 349–371 (CSLFGISSEIAMQVVAVGMIISV).

Belongs to the dicarboxylate/amino acid:cation symporter (DAACS) (TC 2.A.23) family.

It is found in the cell inner membrane. The enzyme catalyses L-serine(in) + Na(+)(in) = L-serine(out) + Na(+)(out). It carries out the reaction L-threonine(in) + Na(+)(in) = L-threonine(out) + Na(+)(out). In terms of biological role, involved in the import of serine and threonine into the cell, with the concomitant import of sodium (symport system). In Acinetobacter baumannii (strain ATCC 17978 / DSM 105126 / CIP 53.77 / LMG 1025 / NCDC KC755 / 5377), this protein is Serine/threonine transporter SstT.